We begin with the raw amino-acid sequence, 297 residues long: Ezy-1 protein (297 aa).

Disordered regions lie at residues 1-34, 115-151, and 255-297; these read MAAVVGTGSDGGGDESGDRRTADAADADGDGDGG, FTGKAEPGAEGDDGEDEEEGEAQGVGKDAVDSSSSSS, and QPAG…SPNM. Acidic residues predominate over residues 123–135; sequence AEGDDGEDEEEGE. The span at 136-150 shows a compositional bias: low complexity; that stretch reads AQGVGKDAVDSSSSS. Residues 259 to 269 show a composition bias toward basic and acidic residues; that stretch reads DGHEPEPKRPE.

The polypeptide is Ezy-1 protein (Ezy-1) (Chlamydomonas reinhardtii (Chlamydomonas smithii)).